Reading from the N-terminus, the 170-residue chain is MIDGDGFRPNVGIVICNSHGQVFWAKRYGQHSWQFPQGGIDDGETPEQAMYRELYEEVGLTKNDVRILASSRHWLRYKLPKRLVRWDSKPVCIGQKQKWFLLRLECDESKVNMQRDRSPEFDGWRWVSYWYPVRQVVSFKRDVYRRALKEFAAIAMPFKERKFKRKGKKG.

The Nudix hydrolase domain maps to 6–149; sequence GFRPNVGIVI…KRDVYRRALK (144 aa). The Nudix box signature appears at 38–59; the sequence is GGIDDGETPEQAMYRELYEEVG.

It belongs to the Nudix hydrolase family. RppH subfamily. A divalent metal cation serves as cofactor.

In terms of biological role, accelerates the degradation of transcripts by removing pyrophosphate from the 5'-end of triphosphorylated RNA, leading to a more labile monophosphorylated state that can stimulate subsequent ribonuclease cleavage. This is RNA pyrophosphohydrolase from Aliivibrio salmonicida (strain LFI1238) (Vibrio salmonicida (strain LFI1238)).